Consider the following 142-residue polypeptide: MAKKIQAIVKLQVSAGMANPSPPVGPALGQQGVNIMEFCKAFNAKTEPLEKGLPIPVVITVYADRSFTFETKTVPAAVLLLKAAGVKSGSPKPNTNKIGKVTKTQVREIAETKQADMTGTSIDANIQSILGTARSMGLEVEE.

Belongs to the universal ribosomal protein uL11 family. In terms of assembly, part of the ribosomal stalk of the 50S ribosomal subunit. Interacts with L10 and the large rRNA to form the base of the stalk. L10 forms an elongated spine to which L12 dimers bind in a sequential fashion forming a multimeric L10(L12)X complex. One or more lysine residues are methylated.

Forms part of the ribosomal stalk which helps the ribosome interact with GTP-bound translation factors. This chain is Large ribosomal subunit protein uL11, found in Hamiltonella defensa subsp. Acyrthosiphon pisum (strain 5AT).